We begin with the raw amino-acid sequence, 1078 residues long: DNA gyrase subunit B (1078 aa).

Residues 889–974 (GKILNIEKTD…QGYIYIACPP (86 aa)) form the Toprim domain. Mg(2+) is bound by residues Glu-895, Asp-939, and Asp-941.

The protein belongs to the type II topoisomerase GyrB family. Heterotetramer, composed of two GyrA and two GyrB chains. In the heterotetramer, GyrA contains the active site tyrosine that forms a transient covalent intermediate with DNA, while GyrB binds cofactors and catalyzes ATP hydrolysis. Requires Mg(2+) as cofactor. In terms of processing, this protein undergoes a protein self splicing that involves a post-translational excision of the intervening region (intein) followed by peptide ligation.

Its subcellular location is the cytoplasm. It carries out the reaction ATP-dependent breakage, passage and rejoining of double-stranded DNA.. In terms of biological role, a type II topoisomerase that negatively supercoils closed circular double-stranded (ds) DNA in an ATP-dependent manner to modulate DNA topology and maintain chromosomes in an underwound state. Negative supercoiling favors strand separation, and DNA replication, transcription, recombination and repair, all of which involve strand separation. Also able to catalyze the interconversion of other topological isomers of dsDNA rings, including catenanes and knotted rings. Type II topoisomerases break and join 2 DNA strands simultaneously in an ATP-dependent manner. The polypeptide is DNA gyrase subunit B (gyrB) (Synechocystis sp. (strain ATCC 27184 / PCC 6803 / Kazusa)).